Here is a 164-residue protein sequence, read N- to C-terminus: Interleukin-10 (164 aa).

Residues Met1 to Ala18 form the signal peptide. Disulfide bonds link Cys30–Cys126 and Cys80–Cys132. N-linked (GlcNAc...) asparagine glycosylation occurs at Asn134.

Belongs to the IL-10 family. In terms of assembly, homodimer. Interacts with IL10RA and IL10RB.

It is found in the secreted. In terms of biological role, major immune regulatory cytokine that acts on many cells of the immune system where it has profound anti-inflammatory functions, limiting excessive tissue disruption caused by inflammation. Mechanistically, IL10 binds to its heterotetrameric receptor comprising IL10RA and IL10RB leading to JAK1 and STAT2-mediated phosphorylation of STAT3. In turn, STAT3 translocates to the nucleus where it drives expression of anti-inflammatory mediators. Targets antigen-presenting cells (APCs) such as macrophages and monocytes and inhibits their release of pro-inflammatory cytokines including granulocyte-macrophage colony-stimulating factor /GM-CSF, granulocyte colony-stimulating factor/G-CSF, IL-1 alpha, IL-1 beta, IL-6, IL-8 and TNF-alpha. Also interferes with antigen presentation by reducing the expression of MHC-class II and co-stimulatory molecules, thereby inhibiting their ability to induce T cell activation. In addition, controls the inflammatory response of macrophages by reprogramming essential metabolic pathways including mTOR signaling. This chain is Interleukin-10 (IL10), found in Orcinus orca (Killer whale).